The following is a 212-amino-acid chain: Thymidylate kinase (212 aa).

An ATP-binding site is contributed by glycine 10–threonine 17.

It belongs to the thymidylate kinase family.

It catalyses the reaction dTMP + ATP = dTDP + ADP. Functionally, phosphorylation of dTMP to form dTDP in both de novo and salvage pathways of dTTP synthesis. The polypeptide is Thymidylate kinase (Yersinia pestis bv. Antiqua (strain Antiqua)).